We begin with the raw amino-acid sequence, 102 residues long: Large ribosomal subunit protein bL21 (102 aa).

Belongs to the bacterial ribosomal protein bL21 family. Part of the 50S ribosomal subunit. Contacts protein L20.

This protein binds to 23S rRNA in the presence of protein L20. This is Large ribosomal subunit protein bL21 from Exiguobacterium sibiricum (strain DSM 17290 / CCUG 55495 / CIP 109462 / JCM 13490 / 255-15).